Consider the following 296-residue polypeptide: Morphine 6-dehydrogenase (296 aa).

Glycine 13 to glycine 22 contributes to the NADP(+) binding site. Tyrosine 52 serves as the catalytic Proton donor. Histidine 110 lines the substrate pocket.

Belongs to the aldo/keto reductase family. As to quaternary structure, monomer.

It carries out the reaction morphine + NAD(+) = morphinone + NADH + H(+). The enzyme catalyses morphine + NADP(+) = morphinone + NADPH + H(+). It participates in alkaloid degradation; codeine degradation. It functions in the pathway alkaloid degradation; morphine degradation. Functionally, oxidizes only the C-6 hydroxy group of morphine and codeine. This Pseudomonas putida (Arthrobacter siderocapsulatus) protein is Morphine 6-dehydrogenase (morA).